The primary structure comprises 125 residues: Small ribosomal subunit protein bS6 (125 aa).

Residues 96–125 (VTEASPMKAAKEERKPLAEVENNDFEDAEE) are disordered. A compositionally biased stretch (basic and acidic residues) spans 104–113 (AAKEERKPLA). Residues 116–125 (ENNDFEDAEE) show a composition bias toward acidic residues.

Belongs to the bacterial ribosomal protein bS6 family.

In terms of biological role, binds together with bS18 to 16S ribosomal RNA. In Haemophilus influenzae (strain 86-028NP), this protein is Small ribosomal subunit protein bS6.